Consider the following 187-residue polypeptide: Ribosome-recycling factor (187 aa).

It belongs to the RRF family.

The protein localises to the cytoplasm. Responsible for the release of ribosomes from messenger RNA at the termination of protein biosynthesis. May increase the efficiency of translation by recycling ribosomes from one round of translation to another. The polypeptide is Ribosome-recycling factor (Anaeromyxobacter sp. (strain Fw109-5)).